An 89-amino-acid polypeptide reads, in one-letter code: Small ribosomal subunit protein uS15 (89 aa).

Belongs to the universal ribosomal protein uS15 family. Part of the 30S ribosomal subunit. Forms a bridge to the 50S subunit in the 70S ribosome, contacting the 23S rRNA.

One of the primary rRNA binding proteins, it binds directly to 16S rRNA where it helps nucleate assembly of the platform of the 30S subunit by binding and bridging several RNA helices of the 16S rRNA. In terms of biological role, forms an intersubunit bridge (bridge B4) with the 23S rRNA of the 50S subunit in the ribosome. The polypeptide is Small ribosomal subunit protein uS15 (Shewanella amazonensis (strain ATCC BAA-1098 / SB2B)).